We begin with the raw amino-acid sequence, 490 residues long: Glutamate--tRNA ligase (490 aa).

The 'HIGH' region motif lies at 12–22 (PSPTGTPHVGL). Residues 256–260 (KLSKR) carry the 'KMSKS' region motif. Lys-259 lines the ATP pocket.

The protein belongs to the class-I aminoacyl-tRNA synthetase family. Glutamate--tRNA ligase type 1 subfamily. As to quaternary structure, monomer.

The protein resides in the cytoplasm. The catalysed reaction is tRNA(Glu) + L-glutamate + ATP = L-glutamyl-tRNA(Glu) + AMP + diphosphate. Functionally, catalyzes the attachment of glutamate to tRNA(Glu) in a two-step reaction: glutamate is first activated by ATP to form Glu-AMP and then transferred to the acceptor end of tRNA(Glu). The chain is Glutamate--tRNA ligase from Mycobacterium sp. (strain KMS).